The chain runs to 499 residues: Lysine--tRNA ligase (499 aa).

The Mg(2+) site is built by Glu-408 and Glu-415.

It belongs to the class-II aminoacyl-tRNA synthetase family. As to quaternary structure, homodimer. Requires Mg(2+) as cofactor.

It is found in the cytoplasm. It catalyses the reaction tRNA(Lys) + L-lysine + ATP = L-lysyl-tRNA(Lys) + AMP + diphosphate. The chain is Lysine--tRNA ligase from Thermoanaerobacter pseudethanolicus (strain ATCC 33223 / 39E) (Clostridium thermohydrosulfuricum).